The sequence spans 886 residues: Alanine--tRNA ligase (886 aa).

The Zn(2+) site is built by His-564, His-568, Cys-666, and His-670.

It belongs to the class-II aminoacyl-tRNA synthetase family. Requires Zn(2+) as cofactor.

Its subcellular location is the cytoplasm. It catalyses the reaction tRNA(Ala) + L-alanine + ATP = L-alanyl-tRNA(Ala) + AMP + diphosphate. Functionally, catalyzes the attachment of alanine to tRNA(Ala) in a two-step reaction: alanine is first activated by ATP to form Ala-AMP and then transferred to the acceptor end of tRNA(Ala). Also edits incorrectly charged Ser-tRNA(Ala) and Gly-tRNA(Ala) via its editing domain. This Prochlorococcus marinus (strain MIT 9515) protein is Alanine--tRNA ligase.